The following is a 422-amino-acid chain: UDP-N-acetylglucosamine 1-carboxyvinyltransferase (422 aa).

22-23 (KN) provides a ligand contact to phosphoenolpyruvate. Arg-93 is a UDP-N-acetyl-alpha-D-glucosamine binding site. The Proton donor role is filled by Cys-117. Cys-117 is modified (2-(S-cysteinyl)pyruvic acid O-phosphothioketal). Residues 122 to 126 (RPVDQ), Asp-305, and Ile-327 each bind UDP-N-acetyl-alpha-D-glucosamine.

It belongs to the EPSP synthase family. MurA subfamily.

The protein localises to the cytoplasm. The enzyme catalyses phosphoenolpyruvate + UDP-N-acetyl-alpha-D-glucosamine = UDP-N-acetyl-3-O-(1-carboxyvinyl)-alpha-D-glucosamine + phosphate. It functions in the pathway cell wall biogenesis; peptidoglycan biosynthesis. Its function is as follows. Cell wall formation. Adds enolpyruvyl to UDP-N-acetylglucosamine. This chain is UDP-N-acetylglucosamine 1-carboxyvinyltransferase, found in Bordetella parapertussis (strain 12822 / ATCC BAA-587 / NCTC 13253).